A 320-amino-acid chain; its full sequence is Lipoyl synthase (320 aa).

A compositionally biased stretch (basic and acidic residues) spans Met1 to Arg29. A disordered region spans residues Met1–Ser32. [4Fe-4S] cluster-binding residues include Cys60, Cys65, Cys71, Cys86, Cys90, Cys93, and Ser300. Positions Cys71–Leu289 constitute a Radical SAM core domain.

It belongs to the radical SAM superfamily. Lipoyl synthase family. [4Fe-4S] cluster is required as a cofactor.

The protein localises to the cytoplasm. It carries out the reaction [[Fe-S] cluster scaffold protein carrying a second [4Fe-4S](2+) cluster] + N(6)-octanoyl-L-lysyl-[protein] + 2 oxidized [2Fe-2S]-[ferredoxin] + 2 S-adenosyl-L-methionine + 4 H(+) = [[Fe-S] cluster scaffold protein] + N(6)-[(R)-dihydrolipoyl]-L-lysyl-[protein] + 4 Fe(3+) + 2 hydrogen sulfide + 2 5'-deoxyadenosine + 2 L-methionine + 2 reduced [2Fe-2S]-[ferredoxin]. The protein operates within protein modification; protein lipoylation via endogenous pathway; protein N(6)-(lipoyl)lysine from octanoyl-[acyl-carrier-protein]: step 2/2. Functionally, catalyzes the radical-mediated insertion of two sulfur atoms into the C-6 and C-8 positions of the octanoyl moiety bound to the lipoyl domains of lipoate-dependent enzymes, thereby converting the octanoylated domains into lipoylated derivatives. The protein is Lipoyl synthase of Cereibacter sphaeroides (strain ATCC 17025 / ATH 2.4.3) (Rhodobacter sphaeroides).